Consider the following 387-residue polypeptide: 3-ketoacyl-CoA thiolase FadA (387 aa).

The active-site Acyl-thioester intermediate is Cys-91. Residues His-343 and Cys-373 each act as proton acceptor in the active site.

This sequence belongs to the thiolase-like superfamily. Thiolase family. In terms of assembly, heterotetramer of two alpha chains (FadB) and two beta chains (FadA).

Its subcellular location is the cytoplasm. It catalyses the reaction an acyl-CoA + acetyl-CoA = a 3-oxoacyl-CoA + CoA. The protein operates within lipid metabolism; fatty acid beta-oxidation. Functionally, catalyzes the final step of fatty acid oxidation in which acetyl-CoA is released and the CoA ester of a fatty acid two carbons shorter is formed. Involved in the aerobic and anaerobic degradation of long-chain fatty acids. The sequence is that of 3-ketoacyl-CoA thiolase FadA (fadA) from Escherichia coli (strain K12).